A 447-amino-acid chain; its full sequence is Tubulin beta chain (447 aa).

Residues Q11, E69, S138, G142, T143, G144, N204, and N226 each coordinate GTP. Residue E69 participates in Mg(2+) binding. The disordered stretch occupies residues 424-447 (QYQEARSTDSDEYDNEEYYNQQEE). Residues 433 to 447 (SDEYDNEEYYNQQEE) show a composition bias toward acidic residues.

Belongs to the tubulin family. In terms of assembly, dimer of alpha and beta chains. A typical microtubule is a hollow water-filled tube with an outer diameter of 25 nm and an inner diameter of 15 nM. Alpha-beta heterodimers associate head-to-tail to form protofilaments running lengthwise along the microtubule wall with the beta-tubulin subunit facing the microtubule plus end conferring a structural polarity. Microtubules usually have 13 protofilaments but different protofilament numbers can be found in some organisms and specialized cells. The cofactor is Mg(2+). In terms of tissue distribution, lens specific.

The protein resides in the cytoplasm. The protein localises to the cytoskeleton. Its function is as follows. Tubulin is the major constituent of microtubules, a cylinder consisting of laterally associated linear protofilaments composed of alpha- and beta-tubulin heterodimers. Microtubules grow by the addition of GTP-tubulin dimers to the microtubule end, where a stabilizing cap forms. Below the cap, tubulin dimers are in GDP-bound state, owing to GTPase activity of alpha-tubulin. This Enteroctopus dofleini (North Pacific giant octopus) protein is Tubulin beta chain.